The primary structure comprises 480 residues: Wax ester synthase/diacylglycerol acyltransferase 7 (480 aa).

Over 1–193 (MTYGEEEPVS…LRSIFTIGST (193 aa)) the chain is Cytoplasmic. The active-site Proton acceptor is His135. The chain crosses the membrane as a helical span at residues 194 to 214 (MRLLWNTTIDMLLLLATVLFL). At 215 to 329 (KDTKTPLKAG…VKDSKCRWGN (115 aa)) the chain is on the lumenal side. N-linked (GlcNAc...) asparagine glycosylation occurs at Asn252. The helical transmembrane segment at 330 to 350 (YFSFIFLPFTIGLQTDPLVYL) threads the bilayer. The Cytoplasmic portion of the chain corresponds to 351–365 (KMSKSMMARKKHSYH). A helical transmembrane segment spans residues 366–386 (AALVYFIIKIVLKVFGAKAAA). Residues 387–480 (ELFDRPVRNT…KASLCERGLL (94 aa)) are Lumenal-facing. Residue Asn395 is glycosylated (N-linked (GlcNAc...) asparagine).

It in the N-terminal section; belongs to the long-chain O-acyltransferase family. In terms of tissue distribution, expressed in roots, stems, leaves, flowers and siliques.

It localises to the cell membrane. The protein localises to the endoplasmic reticulum membrane. Its subcellular location is the golgi apparatus membrane. The enzyme catalyses an acyl-CoA + a 1,2-diacyl-sn-glycerol = a triacyl-sn-glycerol + CoA. It carries out the reaction a long chain fatty alcohol + a fatty acyl-CoA = a wax ester + CoA. The protein operates within glycerolipid metabolism; triacylglycerol biosynthesis. It functions in the pathway lipid metabolism. In terms of biological role, bifunctional wax ester synthase/diacylglycerol acyltransferase that uses acyl-CoAs with 14, 16 and 18 carbons as substrates, preferably in combination with 16:0ol alcohol. Involved in cuticular wax biosynthesis. This Arabidopsis thaliana (Mouse-ear cress) protein is Wax ester synthase/diacylglycerol acyltransferase 7.